We begin with the raw amino-acid sequence, 1271 residues long: MGAQYSTELNKYNNNNNNNNNNNNNNNNNNNNHTISGNENLNNNNNNNNNNNNYNNNNNNNNNNNNNNNNNNNNNNNNNNNNNNNNKNNGNSNSNSNNNNNNNGINKYSNYFESLINNTNKDTNIPNNSNSNNNNSDRDFIQNMIKSANQIKPGEKELVLFHKLHQSLKENQSFSIEELRNSSILSISPDKSFLTNINEINVNNNNNNNNNNNENNKVGVNGSSTTTTTTTTTTTNNNSNNNNNNNNNNNNNNNNNNNNNEDDEDDYGDDDTIENNEPTFVDKPNKSAKLQKPKLKSNLNDTNGGNSPQQNGKISKYMAKKLLALQQKQLEQEQEQKQQQKQQQQQQQQQQQQQQQQQQQQQKDAIENINNNNNNKLQPIVKNSVNKTTKQKKNKTTTHNVKQQITFLTKSDNEDEYDASDEYIDDDDDDDEKYDDDDDEYFEGNNNNNYKKNNISNKSKNKNNNDESDSFSESEIFKQKKLNHDKNQSNPKQQLTSHSEFDNSLLNKNQSRTNSKIQKLQIKEENYHQIQQEHGEKQQQQQQQQQQPQQQQQQQQQQQQQQQQEMQVDKEQTEKIINTNKKEEQKPNDYFPPIPTNPFKRDNETAFGKNNENNNNNNNNNNNNNNNNNNNNNNNNNNYRNNKPNGEGFLSNLKIIPPMISSSPYYSKKSSNVVPTSPKSNLSDQQPPFSPVQISPQKQSPATTTTTTTTTTPTPLKKQKKNKTNNNINNNNINNNNNNNNNNNNNNNNNNNNNNNNNNYSINNINNEEDEENNSTQNNNNNNNNNNNSPQNSNTNSNNSNNSNNSNNISNIVSDGYQWRKYGQKNVKGSLHPRHYYKCTFQGCNVRKQVERIGDTNQNSTVYKGEHCHGFPQTTRVVSDQQAFRNSVMFEGLDGNNNNNNNNNNNNNNYSSNSNSNGNGNGNGNGNGNGNGNGNGNSNGNQDQNGNSFNDQNGDSPTQHGQISPMNSPKNTIPTTTTTTTSISTYVNTNSTNKKNNSKQEKKISVKNETTDDDEFQEDIDQLSNNNNNNNNNNNNNNNNNNNNNNNNNNNNNNNNNNNNNNNNNNNNDDNNNNNNNNNNNNNNNRFNGTSESKGSKKLVIETGSSIDHLDDGFFWRKYGQKSVKGSPFPKSYFKCAELTCPVKKQVIQQDSKYINTYRGKHNHDPPESEAIEKRKKHFNGLYNNNNNNNNNNNNNNNNNNNNNNINNINNNNINNLNSLNNINNINNNNNSNQINNFSGSIQNNLKNILKEQLKEAGKLHNEIENNLIDD.

Residues 1–12 (MGAQYSTELNKY) show a composition bias toward polar residues. 3 disordered regions span residues 1-138 (MGAQ…NSDR), 204-312 (NNNN…QQNG), and 370-515 (NNNN…RTNS). A coiled-coil region spans residues 9–71 (LNKYNNNNNN…NNNNNNNNNN (63 aa)). Low complexity-rich tracts occupy residues 13–103 (NNNN…NNNN), 116–135 (INNT…NNNN), 204–216 (NNNN…NENN), and 223–259 (SSTT…NNNN). The span at 260–274 (NEDDEDDYGDDDTIE) shows a compositional bias: acidic residues. Residues 297-312 (SNLNDTNGGNSPQQNG) are compositionally biased toward polar residues. Residues 320-372 (KKLLALQQKQLEQEQEQKQQQKQQQQQQQQQQQQQQQQQQQQQKDAIENINNN) are a coiled coil. Positions 370 to 388 (NNNNNNKLQPIVKNSVNKT) are enriched in low complexity. The segment covering 413–442 (NEDEYDASDEYIDDDDDDDEKYDDDDDEYF) has biased composition (acidic residues). Residues 443 to 458 (EGNNNNNYKKNNISNK) show a composition bias toward low complexity. Positions 475–487 (EIFKQKKLNHDKN) are enriched in basic and acidic residues. Over residues 488–515 (QSNPKQQLTSHSEFDNSLLNKNQSRTNS) the composition is skewed to polar residues. Residues 520–574 (LQIKEENYHQIQQEHGEKQQQQQQQQQQPQQQQQQQQQQQQQQQQEMQVDKEQTE) are a coiled coil. The segment covering 578 to 587 (NTNKKEEQKP) has biased composition (basic and acidic residues). Disordered stretches follow at residues 578 to 650 (NTNK…EGFL) and 667 to 811 (SKKS…NISN). The span at 610 to 642 (NNENNNNNNNNNNNNNNNNNNNNNNNNNNYRNN) shows a compositional bias: low complexity. The span at 672–702 (NVVPTSPKSNLSDQQPPFSPVQISPQKQSPA) shows a compositional bias: polar residues. 3 stretches are compositionally biased toward low complexity: residues 703-715 (TTTT…TPTP), 725-766 (NNNI…NNIN), and 774-811 (NSTQ…NISN). Residues 766-786 (NNEEDEENNSTQNNNNNNNNN) adopt a coiled-coil conformation. The WRKY 1 DNA-binding region spans 808–872 (NISNIVSDGY…YKGEHCHGFP (65 aa)). Positions 839, 844, 867, and 869 each coordinate Zn(2+). A disordered region spans residues 890-1095 (FEGLDGNNNN…RFNGTSESKG (206 aa)). The segment covering 895–918 (GNNNNNNNNNNNNNNYSSNSNSNG) has biased composition (low complexity). A compositionally biased stretch (gly residues) spans 919-937 (NGNGNGNGNGNGNGNGNGN). Over residues 938–956 (SNGNQDQNGNSFNDQNGDS) the composition is skewed to low complexity. The span at 957-966 (PTQHGQISPM) shows a compositional bias: polar residues. The segment covering 967–995 (NSPKNTIPTTTTTTTSISTYVNTNSTNKK) has biased composition (low complexity). Over residues 998 to 1010 (SKQEKKISVKNET) the composition is skewed to basic and acidic residues. The span at 1011 to 1021 (TDDDEFQEDID) shows a compositional bias: acidic residues. The stretch at 1013–1040 (DDEFQEDIDQLSNNNNNNNNNNNNNNNN) forms a coiled coil. Residues 1025–1085 (NNNNNNNNNN…NNNNNNNNNN (61 aa)) show a composition bias toward low complexity. The WRKY 2 DNA-binding region spans 1105 to 1167 (SSIDHLDDGF…YRGKHNHDPP (63 aa)). Zn(2+) contacts are provided by C1136, C1141, H1162, and H1164. The segment at 1180–1210 (NGLYNNNNNNNNNNNNNNNNNNNNNNINNIN) is disordered. The span at 1184-1210 (NNNNNNNNNNNNNNNNNNNNNNINNIN) shows a compositional bias: low complexity.

It belongs to the WRKY group I family.

The protein resides in the nucleus. Its function is as follows. Probable transcription factor. Interacts specifically with the W box (5'-(T)TGAC[CT]-3'), a frequently occurring elicitor-responsive cis-acting element. The sequence is that of Probable WRKY transcription factor protein 1 (wrky1) from Dictyostelium discoideum (Social amoeba).